The sequence spans 308 residues: Cytochrome b (308 aa).

4 consecutive transmembrane segments (helical) span residues 1 to 21 (FGSL…LLAT), 45 to 66 (WLIR…YLHI), 81 to 101 (WNTG…GYVL), and 146 to 166 (FFAL…IHFT). His65 lines the heme b pocket. Residues His150 and His164 each contribute to the heme b site. His169 is a binding site for a ubiquinone. The next 3 membrane-spanning stretches (helical) occupy residues 194-214 (VKDI…ALFS), 256-276 (LGGV…PFLH), and 288-308 (LSQF…WVGS).

The protein belongs to the cytochrome b family. The cytochrome bc1 complex contains 11 subunits: 3 respiratory subunits (MT-CYB, CYC1 and UQCRFS1), 2 core proteins (UQCRC1 and UQCRC2) and 6 low-molecular weight proteins (UQCRH/QCR6, UQCRB/QCR7, UQCRQ/QCR8, UQCR10/QCR9, UQCR11/QCR10 and a cleavage product of UQCRFS1). This cytochrome bc1 complex then forms a dimer. Requires heme b as cofactor.

It is found in the mitochondrion inner membrane. Functionally, component of the ubiquinol-cytochrome c reductase complex (complex III or cytochrome b-c1 complex) that is part of the mitochondrial respiratory chain. The b-c1 complex mediates electron transfer from ubiquinol to cytochrome c. Contributes to the generation of a proton gradient across the mitochondrial membrane that is then used for ATP synthesis. This Colaptes rupicola (Southern Andean flicker) protein is Cytochrome b (MT-CYB).